The following is a 530-amino-acid chain: Berberine bridge enzyme-like 4 (530 aa).

Residues 1–19 (MKGTLSVLCLVLLVSVLEA) form the signal peptide. C32 and C95 form a disulfide bridge. An N-linked (GlcNAc...) asparagine glycan is attached at N52. In terms of domain architecture, FAD-binding PCMH-type spans 73–247 (NYRKLLAIVA…LSWKINLVDV (175 aa)). Residues 110-172 (HDYEGLSYMS…QTLAFPAGVC (63 aa)) constitute a cross-link (6-(S-cysteinyl)-8alpha-(pros-histidyl)-FAD (His-Cys)). Residues N257, N292, N341, and N441 are each glycosylated (N-linked (GlcNAc...) asparagine).

It belongs to the oxygen-dependent FAD-linked oxidoreductase family. The cofactor is FAD. The FAD cofactor is bound via a bicovalent 6-S-cysteinyl, 8alpha-N1-histidyl FAD linkage.

It localises to the secreted. The protein localises to the cell wall. Its function is as follows. Probable flavin-dependent oxidoreductase. In Arabidopsis thaliana (Mouse-ear cress), this protein is Berberine bridge enzyme-like 4.